Consider the following 311-residue polypeptide: Urease accessory protein UreD (311 aa).

Belongs to the UreD family. UreD, UreF and UreG form a complex that acts as a GTP-hydrolysis-dependent molecular chaperone, activating the urease apoprotein by helping to assemble the nickel containing metallocenter of UreC. The UreE protein probably delivers the nickel.

It localises to the cytoplasm. In terms of biological role, required for maturation of urease via the functional incorporation of the urease nickel metallocenter. This is Urease accessory protein UreD from Synechococcus sp. (strain CC9605).